The sequence spans 312 residues: Ribosomal RNA small subunit methyltransferase H (312 aa).

Residues 37 to 39, aspartate 57, phenylalanine 83, and aspartate 104 each bind S-adenosyl-L-methionine; that span reads GGH.

This sequence belongs to the methyltransferase superfamily. RsmH family.

It is found in the cytoplasm. The catalysed reaction is cytidine(1402) in 16S rRNA + S-adenosyl-L-methionine = N(4)-methylcytidine(1402) in 16S rRNA + S-adenosyl-L-homocysteine + H(+). Specifically methylates the N4 position of cytidine in position 1402 (C1402) of 16S rRNA. The protein is Ribosomal RNA small subunit methyltransferase H of Malacoplasma penetrans (strain HF-2) (Mycoplasma penetrans).